The sequence spans 190 residues: Pyridoxal 5'-phosphate synthase subunit PdxT (190 aa).

46–48 (GES) contributes to the L-glutamine binding site. The active-site Nucleophile is cysteine 78. L-glutamine is bound by residues arginine 108 and 137-138 (IR). Active-site charge relay system residues include histidine 174 and glutamate 176.

It belongs to the glutaminase PdxT/SNO family. In the presence of PdxS, forms a dodecamer of heterodimers. Only shows activity in the heterodimer.

It carries out the reaction aldehydo-D-ribose 5-phosphate + D-glyceraldehyde 3-phosphate + L-glutamine = pyridoxal 5'-phosphate + L-glutamate + phosphate + 3 H2O + H(+). It catalyses the reaction L-glutamine + H2O = L-glutamate + NH4(+). It functions in the pathway cofactor biosynthesis; pyridoxal 5'-phosphate biosynthesis. Catalyzes the hydrolysis of glutamine to glutamate and ammonia as part of the biosynthesis of pyridoxal 5'-phosphate. The resulting ammonia molecule is channeled to the active site of PdxS. The sequence is that of Pyridoxal 5'-phosphate synthase subunit PdxT from Chloroflexus aurantiacus (strain ATCC 29366 / DSM 635 / J-10-fl).